The chain runs to 304 residues: MPEREEPWRKTLETFLNYLTLERNFSGNTRASYLNDLGRYLAWLHECGVKPEEAAPGDIRKFIQELHEIGLEASSIARNISAIRSFHKFLLTERLATMNPAENIHQPKLARYLPSVLTIEEMATLLDAPLKRHPTSTFMLRDKAMLEFLYATGVRVSELLGLSRLNLHMDDGFVRVFGKGSKERLVPVGQTAISWMKRYLDELRPGMMSATSHDTIFLNSRGGPLSRMAAWNIVREHAVIAGIEKPISPHTFRHSFATHLLEGGADLRVVQEMLGHSSIIATQIYTHIDRSFIKEVHKTFHPRG.

The region spanning 6–91 (EPWRKTLETF…AIRSFHKFLL (86 aa)) is the Core-binding (CB) domain. The Tyr recombinase domain maps to 112-298 (YLPSVLTIEE…DRSFIKEVHK (187 aa)). Residues R155, K179, H250, R253, and H276 contribute to the active site. The active-site O-(3'-phospho-DNA)-tyrosine intermediate is Y285.

The protein belongs to the 'phage' integrase family. XerD subfamily. In terms of assembly, forms a cyclic heterotetrameric complex composed of two molecules of XerC and two molecules of XerD.

It localises to the cytoplasm. Functionally, site-specific tyrosine recombinase, which acts by catalyzing the cutting and rejoining of the recombining DNA molecules. The XerC-XerD complex is essential to convert dimers of the bacterial chromosome into monomers to permit their segregation at cell division. It also contributes to the segregational stability of plasmids. The sequence is that of Tyrosine recombinase XerD from Chlorobaculum tepidum (strain ATCC 49652 / DSM 12025 / NBRC 103806 / TLS) (Chlorobium tepidum).